A 203-amino-acid chain; its full sequence is MNRFVIADSTLCIGCHTCEAACSETHRQHGLQSMPRLRVMLNEKESAPQLCHHCEDAPCAVVCPVNAITRVDGAVQLNESLCVSCKLCGIACPFGAIEFSGSRPLDIPANANTPKAPPAPPAPARVSTLLDWVPGIRAIAVKCDLCSFDEQGPACVRMCPTKALHLVDNTDIARVSKRKRELTFNTDFGDLTLFQQAQSGEAK.

4Fe-4S ferredoxin-type domains lie at 2-32 (NRFVIADSTLCIGCHTCEAACSETHRQHGLQ), 42-72 (NEKESAPQLCHHCEDAPCAVVCPVNAITRVD), 73-102 (GAVQLNESLCVSCKLCGIACPFGAIEFSGS), and 137-169 (RAIAVKCDLCSFDEQGPACVRMCPTKALHLVDN). [4Fe-4S] cluster contacts are provided by Cys12, Cys15, Cys18, Cys22, Cys51, Cys54, Cys59, Cys63, Cys82, Cys85, Cys88, Cys92, Cys143, Cys146, Cys155, and Cys159.

FHL comprises of a formate dehydrogenase, unidentified electron carriers and a hydrogenase (isoenzyme 3). In this non-energy conserving pathway, molecular hydrogen and carbodioxide are released from formate. Requires [4Fe-4S] cluster as cofactor.

Functionally, probable electron transfer protein for hydrogenase 3. The protein is Formate hydrogenlyase subunit 2 (hycB) of Escherichia coli (strain K12).